A 66-amino-acid polypeptide reads, in one-letter code: Cold shock-like protein CspD (66 aa).

One can recognise a CSD domain in the interval 4–63 (GKVKWFNGEKGFGFIEVEGGEDVFVHFSAIQGDGFKTLEEGQEVSFEIVDGNRGPQAANV).

As to quaternary structure, homodimer.

It localises to the cytoplasm. The chain is Cold shock-like protein CspD (cspD) from Bacillus cereus.